We begin with the raw amino-acid sequence, 90 residues long: uncharacterized protein (90 aa).

Residues 62-90 (RQLKKKQAYKPDPEASFSWSANTSTRGRR) form a disordered region. A compositionally biased stretch (polar residues) spans 78–90 (FSWSANTSTRGRR).

This is an uncharacterized protein from Escherichia coli (strain K12).